Consider the following 273-residue polypeptide: Putative methyltransferase Cher3 (273 aa).

The CheR-type methyltransferase domain occupies 1 to 273 (MTSERNTDIE…VKPQRIFRKS (273 aa)). S-adenosyl-L-methionine contacts are provided by residues S76, R80, E114, D137, 199-200 (SL), and 215-216 (RN).

This chain is Putative methyltransferase Cher3 (cheR3), found in Pseudomonas putida (strain ATCC 47054 / DSM 6125 / CFBP 8728 / NCIMB 11950 / KT2440).